The primary structure comprises 542 residues: ABC transport system permease protein p69 (542 aa).

Helical transmembrane passes span 23 to 43 (ALAI…FSGF), 77 to 97 (IFYV…FSYL), 114 to 134 (FTIF…NNLF), 140 to 160 (ATLT…TAFF), 212 to 232 (LSIA…GGTV), 236 to 256 (LVLI…ASVF), 287 to 307 (VMIY…LVQL), 350 to 370 (TQAI…GFLA), 386 to 406 (LLVI…PIIF), 412 to 432 (IIFV…TINF), 481 to 501 (LVVF…NFFE), and 509 to 529 (GTIT…LMAV). An ABC transmembrane type-1 domain is found at 349 to 526 (TTQAISLITL…VYLMVFEVIL (178 aa)).

It belongs to the binding-protein-dependent transport system permease family.

The protein localises to the cell membrane. Functionally, probably part of a high-affinity transport system. This chain is ABC transport system permease protein p69 (p69), found in Mycoplasma pneumoniae (strain ATCC 29342 / M129 / Subtype 1) (Mycoplasmoides pneumoniae).